We begin with the raw amino-acid sequence, 120 residues long: MPAWMIRNRVGKKLFDGYLVFCFERNPWAKVVSRYLYYKRFDKNFNLSFREFVKSNWIYDALNFPQYTDPLRNYKVIVDFIGYYENLEEDIAKVMKKIGLPEELDVRINTAADDNYRKIL.

This is an uncharacterized protein from Archaeoglobus fulgidus (strain ATCC 49558 / DSM 4304 / JCM 9628 / NBRC 100126 / VC-16).